The chain runs to 100 residues: uncharacterized protein (100 aa).

The segment covering 65-91 has biased composition (basic and acidic residues); sequence DDRERHLSATGERRREQGFGTSRRKDP. The segment at 65 to 100 is disordered; that stretch reads DDRERHLSATGERRREQGFGTSRRKDPSLYNWSDVK.

Belongs to the chlamydial CPn_0121/CT_031/TC_0300 family.

This is an uncharacterized protein from Chlamydia trachomatis serovar D (strain ATCC VR-885 / DSM 19411 / UW-3/Cx).